Consider the following 160-residue polypeptide: Glucan endo-1,3-beta-glucosidase, acidic isoform PR-O (160 aa).

Glutamate 81 acts as the Nucleophile in catalysis.

Belongs to the glycosyl hydrolase 17 family. Post-translationally, the N-terminus is blocked.

It is found in the secreted. Its subcellular location is the extracellular space. It catalyses the reaction Hydrolysis of (1-&gt;3)-beta-D-glucosidic linkages in (1-&gt;3)-beta-D-glucans.. In terms of biological role, implicated in the defense of plants against pathogens. The polypeptide is Glucan endo-1,3-beta-glucosidase, acidic isoform PR-O (PR0) (Nicotiana tabacum (Common tobacco)).